The chain runs to 289 residues: Inorganic pyrophosphatase (289 aa).

R80 contributes to the diphosphate binding site. D117, D122, and D154 together coordinate Mg(2+).

This sequence belongs to the PPase family. In terms of assembly, homodimer. It depends on Mg(2+) as a cofactor.

It localises to the cytoplasm. The catalysed reaction is diphosphate + H2O = 2 phosphate + H(+). In Schizosaccharomyces pombe (strain 972 / ATCC 24843) (Fission yeast), this protein is Inorganic pyrophosphatase (ppa1).